Here is a 311-residue protein sequence, read N- to C-terminus: 4-diphosphocytidyl-2-C-methyl-D-erythritol kinase (311 aa).

Lysine 11 is an active-site residue. 94-104 (PVAAGLAGGSA) lines the ATP pocket. Aspartate 136 is a catalytic residue.

It belongs to the GHMP kinase family. IspE subfamily.

It catalyses the reaction 4-CDP-2-C-methyl-D-erythritol + ATP = 4-CDP-2-C-methyl-D-erythritol 2-phosphate + ADP + H(+). It functions in the pathway isoprenoid biosynthesis; isopentenyl diphosphate biosynthesis via DXP pathway; isopentenyl diphosphate from 1-deoxy-D-xylulose 5-phosphate: step 3/6. Its function is as follows. Catalyzes the phosphorylation of the position 2 hydroxy group of 4-diphosphocytidyl-2C-methyl-D-erythritol. This chain is 4-diphosphocytidyl-2-C-methyl-D-erythritol kinase, found in Synechococcus sp. (strain JA-2-3B'a(2-13)) (Cyanobacteria bacterium Yellowstone B-Prime).